Reading from the N-terminus, the 559-residue chain is Neutral amino acid transporter 9 (559 aa).

The Cytoplasmic segment spans residues 1-118 (MANVDSDSRH…YTEGYRKNTS (118 aa)). A helical membrane pass occupies residues 119 to 139 (LVTIFMIWNTMMGTSILSIPW). The interval 128–133 (TMMGTS) is important for arginine binding and amino acid transport. Arginine is bound at residue S133. Over 140–145 (GIKQAG) the chain is Lumenal. Residues 146–166 (FTTGMCVIVLMGLLTLYCCYR) form a helical membrane-spanning segment. Residues 167–197 (VVKSRSMIVTSDTTTWEYPDVCKHYFGSFGQ) lie on the Cytoplasmic side of the membrane. A helical membrane pass occupies residues 198–224 (WSSLLFSLVSLIGAMIVYWVLMSNFLF). The Lumenal portion of the chain corresponds to 225–281 (NTGKFIFNFIHHINDTDTVLSTNNSSPVICPSAGSGHPDNSSMIFYNSDTEVRLFER). N-linked (GlcNAc...) asparagine glycans are attached at residues N238, N247, and N264. C254 and C422 form a disulfide bridge. Residues 282 to 298 (WWDKSKTVPFYLIGLLL) form a helical membrane-spanning segment. The Cytoplasmic segment spans residues 299–307 (PLLNFKSPS). A helical membrane pass occupies residues 308–332 (FFSKFNILGTVSVLYLIFIVTLKAI). At 333–354 (RLGFHLEFHWFAPTEFFVPEIR) the chain is on the lumenal side. The helical transmembrane segment at 355–375 (AQFPQLTGVLTLAFFIHNCII) threads the bilayer. The Cytoplasmic segment spans residues 376–392 (TLLKNNKNQENNVRDLC). Residues 393-413 (IAYMLVTLTYLYIGVLVFASF) traverse the membrane as a helical segment. At 414–435 (PSPPLPKDCIEQNFLDNFPSSD) the chain is on the lumenal side. The helical transmembrane segment at 436-456 (TLSFIARICLLFQMMTVYPLL) threads the bilayer. A CARC motif motif is present at residues 442–452 (RICLLFQMMTV). The short motif at 455–461 (LLGYLAR) is the CRAC motif element. The Cytoplasmic portion of the chain corresponds to 457 to 477 (GYLARVQLLGHIFGDIYPSIF). A helical membrane pass occupies residues 478 to 498 (HVLILNLIIVGAGVTMACFYP). Topologically, residues 499-505 (NIGGIIR) are lumenal. A helical transmembrane segment spans residues 506–526 (YSGAACGLAFVFIYPSLIYIL). At 527-538 (SQHQEERLTWPK) the chain is on the cytoplasmic side. Residues 539 to 559 (LVFHIIIIILGLANLIAQFFM) traverse the membrane as a helical segment.

This sequence belongs to the amino acid/polyamine transporter 2 family. SLC38A9 subfamily. Associated component of the Ragulator complex (composed of LAMTOR1, LAMTOR2, LAMTOR3, LAMTOR4 and LAMTOR5). Associated component of the Rag GTPases heterodimers (composed of RRAGA, RRAGB, RRAGC and RRAGD); this interaction is independent of the Ragulator complex but depends on the nucleotide loading state of the Rag GTPase heterodimer. Interacts with TM4SF5. Interacts with NPC1; this interaction inhibits cholesterol-mediated mTORC1 activation via its sterol transport activity. In terms of processing, glycosylated.

The protein localises to the lysosome membrane. It localises to the late endosome membrane. It carries out the reaction L-leucine(in) = L-leucine(out). It catalyses the reaction L-tyrosine(in) = L-tyrosine(out). The catalysed reaction is L-glutamine(out) = L-glutamine(in). The enzyme catalyses L-asparagine(out) = L-asparagine(in). Its function is as follows. Lysosomal amino acid transporter involved in the activation of mTORC1 in response to amino acid levels. Probably acts as an amino acid sensor of the Rag GTPases and Ragulator complexes, 2 complexes involved in amino acid sensing and activation of mTORC1, a signaling complex promoting cell growth in response to growth factors, energy levels, and amino acids. Following activation by amino acids, the Ragulator and Rag GTPases function as a scaffold recruiting mTORC1 to lysosomes where it is in turn activated. SLC38A9 mediates transport of amino acids with low capacity and specificity with a slight preference for polar amino acids. Acts as an arginine sensor. Following activation by arginine binding, mediates transport of L-glutamine, leucine and tyrosine with high efficiency, and is required for the efficient utilization of these amino acids after lysosomal protein degradation. However, the transport mechanism is not well defined and the role of sodium is not clear. Can disassemble the lysosomal folliculin complex (LFC), and thereby triggers GAP activity of FLCN:FNIP2 toward RRAGC. Acts as an cholesterol sensor that conveys increases in lysosomal cholesterol, leading to lysosomal recruitment and activation of mTORC1 via the Rag GTPases. Guanine exchange factor (GEF) that, upon arginine binding, stimulates GDP release from RRAGA and therefore activates the Rag GTPase heterodimer and the mTORC1 pathway in response to nutrient sufficiency. The sequence is that of Neutral amino acid transporter 9 from Rattus norvegicus (Rat).